A 320-amino-acid chain; its full sequence is Reticulocalbin-2 (320 aa).

Positions 1–25 (MRLGPRPAALGLLLPLLLYAAVAGA) are cleaved as a signal peptide. 2 EF-hand domains span residues 64 to 99 (EQQRRLQSIIKKIDSDSDGFLTENELSQWIQMSFKH) and 100 to 135 (YAMQEAKQQFVEYDKNSDGAVTWDEYNIQMYDRVID). Residues Asp77, Asp79, Asp81, Glu88, Asp113, Asn115, Asp117, and Glu124 each coordinate Ca(2+). Thr140 carries the phosphothreonine modification. EF-hand domains follow at residues 150 to 185 (FRQLHLKDKKRFEKANQDSGPGLSLEEFIAFEHPEE), 189 to 224 (MTEFVIQEALEEHDKNGDGFVSLEEFLGDYRRDPTA), 230 to 265 (WILVEKDRFVNDYDKDNDGRLDPQELLSWVVPNNQG), and 266 to 301 (IAQEEALHLIDEMDLNSDKKLSEEEILENQDLFLTS). Ca(2+) is bound by residues Asp167, Glu176, Asp202, Asn204, Asp206, Glu213, Asp243, Asp245, Asp247, Arg249, Glu254, Asp279, Asn281, Asp283, Lys285, and Glu290. The Prevents secretion from ER motif lies at 317 to 320 (HDEL).

This sequence belongs to the CREC family.

The protein localises to the endoplasmic reticulum lumen. Its function is as follows. Not known. Binds calcium. The protein is Reticulocalbin-2 (Rcn2) of Mus musculus (Mouse).